Consider the following 99-residue polypeptide: Large ribosomal subunit protein uL23 (99 aa).

The protein belongs to the universal ribosomal protein uL23 family. As to quaternary structure, part of the 50S ribosomal subunit. Contacts protein L29, and trigger factor when it is bound to the ribosome.

In terms of biological role, one of the early assembly proteins it binds 23S rRNA. One of the proteins that surrounds the polypeptide exit tunnel on the outside of the ribosome. Forms the main docking site for trigger factor binding to the ribosome. The chain is Large ribosomal subunit protein uL23 from Xanthomonas campestris pv. campestris (strain B100).